The following is a 663-amino-acid chain: Probable acetolactate synthase 2, chloroplastic (663 aa).

The segment covering 1-26 (MAAAAAAASLSVSDAAAKLPKPGGQV) has biased composition (low complexity). Positions 1-56 (MAAAAAAASLSVSDAAAKLPKPGGQVQRRRDRDRPRVDAAACTRDSRRPTRERCST) are disordered. The transit peptide at 1 to 79 (MAAAAAAASL…TPVRAPVRTR (79 aa)) directs the protein to the chloroplast. Composition is skewed to basic and acidic residues over residues 28–37 (RRRDRDRPRV) and 44–54 (RDSRRPTRERC). Glu-132 is a thiamine diphosphate binding site. Cysteines 152 and 298 form a disulfide. FAD contacts are provided by residues Arg-234, 340–361 (HGTVYANYAVDNADLLLALGVR), and 383–402 (DIDPSELGKNKQPHVSICAD). Residues 478–558 (QHQMWATQHY…VKVMVLNNQH (81 aa)) are thiamine pyrophosphate binding. Mg(2+) contacts are provided by Asp-529 and Asn-556.

Belongs to the TPP enzyme family. Mg(2+) is required as a cofactor. It depends on thiamine diphosphate as a cofactor.

The protein resides in the plastid. Its subcellular location is the chloroplast. It carries out the reaction 2 pyruvate + H(+) = (2S)-2-acetolactate + CO2. It functions in the pathway amino-acid biosynthesis; L-isoleucine biosynthesis; L-isoleucine from 2-oxobutanoate: step 1/4. It participates in amino-acid biosynthesis; L-valine biosynthesis; L-valine from pyruvate: step 1/4. In Oryza sativa subsp. japonica (Rice), this protein is Probable acetolactate synthase 2, chloroplastic (ALS2).